A 410-amino-acid polypeptide reads, in one-letter code: Transposase for insertion sequence element IS801 (410 aa).

Belongs to the transposase 32 family.

In terms of biological role, involved in the transposition of the insertion sequence. The polypeptide is Transposase for insertion sequence element IS801 (Pseudomonas savastanoi pv. phaseolicola (Pseudomonas syringae pv. phaseolicola)).